The primary structure comprises 284 residues: GPN-loop GTPase 3 (284 aa).

13-18 (GSGKST) contacts GTP. The Gly-Pro-Asn (GPN)-loop; involved in dimer interface signature appears at 72–74 (GPN). Position 174–177 (174–177 (TKMD)) interacts with GTP. The tract at residues 261 to 284 (KEPKEHEEESSSMFDEYFQERQNE) is disordered.

This sequence belongs to the GPN-loop GTPase family. As to quaternary structure, heterodimer with GPN1. Binds to RNA polymerase II (RNAPII). Interacts directly with subunits RPB4 and RPB7 and the CTD of RPB1.

Its function is as follows. Small GTPase required for proper localization of RNA polymerase II (RNAPII). May act at an RNAP assembly step prior to nuclear import. The chain is GPN-loop GTPase 3 from Rattus norvegicus (Rat).